The chain runs to 177 residues: ATP synthase subunit delta (177 aa).

The protein belongs to the ATPase delta chain family. As to quaternary structure, F-type ATPases have 2 components, F(1) - the catalytic core - and F(0) - the membrane proton channel. F(1) has five subunits: alpha(3), beta(3), gamma(1), delta(1), epsilon(1). F(0) has three main subunits: a(1), b(2) and c(10-14). The alpha and beta chains form an alternating ring which encloses part of the gamma chain. F(1) is attached to F(0) by a central stalk formed by the gamma and epsilon chains, while a peripheral stalk is formed by the delta and b chains.

Its subcellular location is the cell inner membrane. In terms of biological role, f(1)F(0) ATP synthase produces ATP from ADP in the presence of a proton or sodium gradient. F-type ATPases consist of two structural domains, F(1) containing the extramembraneous catalytic core and F(0) containing the membrane proton channel, linked together by a central stalk and a peripheral stalk. During catalysis, ATP synthesis in the catalytic domain of F(1) is coupled via a rotary mechanism of the central stalk subunits to proton translocation. Its function is as follows. This protein is part of the stalk that links CF(0) to CF(1). It either transmits conformational changes from CF(0) to CF(1) or is implicated in proton conduction. The chain is ATP synthase subunit delta from Vibrio alginolyticus.